A 233-amino-acid polypeptide reads, in one-letter code: RNA/RNP complex-1-interacting phosphatase homolog (233 aa).

Residues 1–14 show a composition bias toward basic residues; sequence MSNYHHNHNYQHRP. The segment at 1-21 is disordered; it reads MSNYHHNHNYQHRPRGYERLP. The Tyrosine-protein phosphatase domain occupies 34–206; it reads NVGRDIDGTR…LYEAERKKKY (173 aa). Catalysis depends on Cys-150, which acts as the Phosphocysteine intermediate. Residue 151–156 coordinates substrate; sequence THGLNR. Residue Arg-156 is the Proton donor/acceptor of the active site. The tract at residues 204-233 is disordered; sequence KKYGKSSGKSSGNSADSTISSEQLHRNNSQ. Positions 208-217 are enriched in low complexity; that stretch reads KSSGKSSGNS. Residues 218–233 show a composition bias toward polar residues; sequence ADSTISSEQLHRNNSQ.

The protein belongs to the protein-tyrosine phosphatase family. Non-receptor class dual specificity subfamily. Interacts with the ERI/DICER complex component dcr-1. Interacts with ERI/DICER complex components rrf-3 and isoform b of eri-1. Interacts with drh-3 and rde-8.

It localises to the cytoplasm. The protein resides in the nucleus. RNA polyphosphatase which has RNA 5'-triphosphatase and diphosphatase activities. Displays poor protein-tyrosine phosphatase activity. Binds to 5'-triphosphorylated RNAs (also called ppp-RNAs). Dephosphorylates ppp-RNAs converting them to 5'-monophosphorylated RNAs (also called p-RNAs). During small-RNA-mediated gene-silencing or RNA interference (RNAi), involved in the dcr-1-mediated processing of an amplified dsRNA intermediate. This is most likely in association with several components of the ERI/DICER complex including dcr-1, eri-1 and rrf-3. Plays a role in the biogenesis of 26G small interfering RNAs (26G-siRNAs), which are a class of 26 nucleotide siRNAs that possess a guanine residue at the 5'-end, by dephosphorylating 5'-triphosphorylated 26G-siRNAs prior to their maturation by the ERI/DICER complex. Plays a role in the biogenesis of csr-1-bound 22G small interfering RNAs (22G-siRNAs), which are a class of 22 nucleotide siRNAs that possess a guanine residue at the 5'-end. Not required for the biogenesis of microRNAs (miRNA) or for the biogenesis of a class of 21 nucleotide PIWI-interacting RNAs (piRNAs) that possess a uracil residue at the 5'-end (also called 21U-RNAs). This Caenorhabditis elegans protein is RNA/RNP complex-1-interacting phosphatase homolog.